A 230-amino-acid polypeptide reads, in one-letter code: Cytochrome c oxidase subunit 2 (230 aa).

Residues 1 to 14 (MAHPSQLGFQDAAS) lie on the Mitochondrial intermembrane side of the membrane. A helical membrane pass occupies residues 15–45 (PVMEELLHFHDHALMIVFLISTLVLYIIAAT). Residues 46 to 59 (ASTKLTDKYILDSQ) are Mitochondrial matrix-facing. Residues 60–87 (EIEVIWTIMPAVILILIALPSLRILYLM) traverse the membrane as a helical segment. The Mitochondrial intermembrane segment spans residues 88-230 (DEINDPHLTV…NWSSLMLEDA (143 aa)). H161, C196, E198, C200, H204, and M207 together coordinate Cu cation. E198 is a binding site for Mg(2+).

Belongs to the cytochrome c oxidase subunit 2 family. Component of the cytochrome c oxidase (complex IV, CIV), a multisubunit enzyme composed of 14 subunits. The complex is composed of a catalytic core of 3 subunits MT-CO1, MT-CO2 and MT-CO3, encoded in the mitochondrial DNA, and 11 supernumerary subunits COX4I, COX5A, COX5B, COX6A, COX6B, COX6C, COX7A, COX7B, COX7C, COX8 and NDUFA4, which are encoded in the nuclear genome. The complex exists as a monomer or a dimer and forms supercomplexes (SCs) in the inner mitochondrial membrane with NADH-ubiquinone oxidoreductase (complex I, CI) and ubiquinol-cytochrome c oxidoreductase (cytochrome b-c1 complex, complex III, CIII), resulting in different assemblies (supercomplex SCI(1)III(2)IV(1) and megacomplex MCI(2)III(2)IV(2)). Found in a complex with TMEM177, COA6, COX18, COX20, SCO1 and SCO2. Interacts with TMEM177 in a COX20-dependent manner. Interacts with COX20. Interacts with COX16. The cofactor is Cu cation.

The protein resides in the mitochondrion inner membrane. The enzyme catalyses 4 Fe(II)-[cytochrome c] + O2 + 8 H(+)(in) = 4 Fe(III)-[cytochrome c] + 2 H2O + 4 H(+)(out). Component of the cytochrome c oxidase, the last enzyme in the mitochondrial electron transport chain which drives oxidative phosphorylation. The respiratory chain contains 3 multisubunit complexes succinate dehydrogenase (complex II, CII), ubiquinol-cytochrome c oxidoreductase (cytochrome b-c1 complex, complex III, CIII) and cytochrome c oxidase (complex IV, CIV), that cooperate to transfer electrons derived from NADH and succinate to molecular oxygen, creating an electrochemical gradient over the inner membrane that drives transmembrane transport and the ATP synthase. Cytochrome c oxidase is the component of the respiratory chain that catalyzes the reduction of oxygen to water. Electrons originating from reduced cytochrome c in the intermembrane space (IMS) are transferred via the dinuclear copper A center (CU(A)) of subunit 2 and heme A of subunit 1 to the active site in subunit 1, a binuclear center (BNC) formed by heme A3 and copper B (CU(B)). The BNC reduces molecular oxygen to 2 water molecules using 4 electrons from cytochrome c in the IMS and 4 protons from the mitochondrial matrix. The protein is Cytochrome c oxidase subunit 2 (mt-co2) of Tetraodon nigroviridis (Spotted green pufferfish).